Reading from the N-terminus, the 262-residue chain is Demethyldecarbamoylnovobiocin O-methyltransferase (262 aa).

S-adenosyl-L-methionine is bound at residue 64 to 65 (TM). The Proton acceptor role is filled by Glu-72. Residues 92-96 (ETGVW), 122-126 (DSFQG), Phe-178, 196-197 (DG), and Ser-202 contribute to the S-adenosyl-L-methionine site. Asp-196 lines the Mg(2+) pocket. The Mg(2+) site is built by Asp-223 and Asp-224.

Belongs to the methyltransferase TylF/MycF family. Homodimer. Mg(2+) is required as a cofactor.

The catalysed reaction is desmethyldescarbamoylnovobiocin + S-adenosyl-L-methionine = descarbamoylnovobiocin + S-adenosyl-L-homocysteine + H(+). Its pathway is antibiotic biosynthesis; novobiocin biosynthesis. S-adenosyl-L-methionine-dependent O-methyltransferase that methylates at 4-OH of the noviose moiety, the penultimate step in the novobiocin biosynthesis pathway. Novobiocin is an aminocoumarin family antibiotic that targets bacterial DNA gyrases. The sequence is that of Demethyldecarbamoylnovobiocin O-methyltransferase (novP) from Streptomyces niveus (Streptomyces spheroides).